We begin with the raw amino-acid sequence, 117 residues long: 16 kDa protein (117 aa).

The protein is 16 kDa protein of Tobacco rattle virus (strain PLB).